A 411-amino-acid chain; its full sequence is Dual-specificity RNA methyltransferase RlmN (411 aa).

Glu-125 (proton acceptor) is an active-site residue. The Radical SAM core domain maps to Glu-131 to Leu-380. A disulfide bridge connects residues Cys-138 and Cys-383. [4Fe-4S] cluster-binding residues include Cys-145, Cys-149, and Cys-152. S-adenosyl-L-methionine is bound by residues Gly-209 to Glu-210, Ser-241, Ser-263 to His-265, and Asn-340. The active-site S-methylcysteine intermediate is the Cys-383.

Belongs to the radical SAM superfamily. RlmN family. [4Fe-4S] cluster is required as a cofactor.

The protein localises to the cytoplasm. It catalyses the reaction adenosine(2503) in 23S rRNA + 2 reduced [2Fe-2S]-[ferredoxin] + 2 S-adenosyl-L-methionine = 2-methyladenosine(2503) in 23S rRNA + 5'-deoxyadenosine + L-methionine + 2 oxidized [2Fe-2S]-[ferredoxin] + S-adenosyl-L-homocysteine. The enzyme catalyses adenosine(37) in tRNA + 2 reduced [2Fe-2S]-[ferredoxin] + 2 S-adenosyl-L-methionine = 2-methyladenosine(37) in tRNA + 5'-deoxyadenosine + L-methionine + 2 oxidized [2Fe-2S]-[ferredoxin] + S-adenosyl-L-homocysteine. Specifically methylates position 2 of adenine 2503 in 23S rRNA and position 2 of adenine 37 in tRNAs. m2A2503 modification seems to play a crucial role in the proofreading step occurring at the peptidyl transferase center and thus would serve to optimize ribosomal fidelity. This chain is Dual-specificity RNA methyltransferase RlmN, found in Brucella anthropi (strain ATCC 49188 / DSM 6882 / CCUG 24695 / JCM 21032 / LMG 3331 / NBRC 15819 / NCTC 12168 / Alc 37) (Ochrobactrum anthropi).